The chain runs to 240 residues: Probable transcriptional regulatory protein VFMJ11_A0186 (240 aa).

It belongs to the TACO1 family.

It localises to the cytoplasm. The sequence is that of Probable transcriptional regulatory protein VFMJ11_A0186 from Aliivibrio fischeri (strain MJ11) (Vibrio fischeri).